The chain runs to 122 residues: Small ribosomal subunit protein uS13 (122 aa).

Positions 95–122 (SLPCRGQRTSTNARTRKGPKRAAVKKKK) are disordered. Positions 108–122 (RTRKGPKRAAVKKKK) are enriched in basic residues.

The protein belongs to the universal ribosomal protein uS13 family. Part of the 30S ribosomal subunit. Forms a loose heterodimer with protein S19. Forms two bridges to the 50S subunit in the 70S ribosome.

Functionally, located at the top of the head of the 30S subunit, it contacts several helices of the 16S rRNA. In the 70S ribosome it contacts the 23S rRNA (bridge B1a) and protein L5 of the 50S subunit (bridge B1b), connecting the 2 subunits; these bridges are implicated in subunit movement. Contacts the tRNAs in the A and P-sites. The sequence is that of Small ribosomal subunit protein uS13 from Desulforapulum autotrophicum (strain ATCC 43914 / DSM 3382 / VKM B-1955 / HRM2) (Desulfobacterium autotrophicum).